Reading from the N-terminus, the 447-residue chain is Argininosuccinate synthase (447 aa).

Residues 17 to 25 and alanine 43 contribute to the ATP site; that span reads AFSGGLDTS. Residue tyrosine 99 coordinates L-citrulline. Residues glycine 129 and threonine 131 each coordinate ATP. Positions 131, 135, and 136 each coordinate L-aspartate. Asparagine 135 serves as a coordination point for L-citrulline. Position 136 (aspartate 136) interacts with ATP. The L-citrulline site is built by arginine 139 and serine 192. Aspartate 194 serves as a coordination point for ATP. Threonine 201, glutamate 203, and glutamate 280 together coordinate L-citrulline.

Belongs to the argininosuccinate synthase family. Type 2 subfamily. As to quaternary structure, homotetramer.

Its subcellular location is the cytoplasm. It carries out the reaction L-citrulline + L-aspartate + ATP = 2-(N(omega)-L-arginino)succinate + AMP + diphosphate + H(+). The protein operates within amino-acid biosynthesis; L-arginine biosynthesis; L-arginine from L-ornithine and carbamoyl phosphate: step 2/3. The protein is Argininosuccinate synthase of Salmonella heidelberg (strain SL476).